The following is a 162-amino-acid chain: Interleukin-15 (162 aa).

An N-terminal signal peptide occupies residues 1-29; sequence MKILKPYMRNTSISCYLCFLLNSHFLTEA. Residues 30–48 constitute a propeptide that is removed on maturation; sequence GIHVFILGCVSVGLPKTEA. 2 cysteine pairs are disulfide-bonded: cysteine 83–cysteine 133 and cysteine 90–cysteine 136. N-linked (GlcNAc...) asparagine glycosylation is found at asparagine 104, asparagine 108, and asparagine 119.

The protein belongs to the IL-15/IL-21 family.

The protein localises to the secreted. Cytokine that plays a major role in the development of inflammatory and protective immune responses to microbial invaders and parasites by modulating immune cells of both the innate and adaptive immune systems. Stimulates the proliferation and activation of natural killer cells, T-cells and B-cells and promotes the secretion of several cytokines. In monocytes, induces the production of IL8 and monocyte chemotactic protein 1/CCL2, two chemokines that attract neutrophils and monocytes respectively to sites of infection. Unlike most cytokines, which are secreted in soluble form, IL15 is expressed in association with its high affinity IL15RA on the surface of IL15-producing cells and delivers signals to target cells that express IL2RB and IL2RG receptor subunits. Binding to its receptor triggers the phosphorylation of JAK1 and JAK3 and the recruitment and subsequent phosphorylation of signal transducer and activator of transcription-3/STAT3 and STAT5. In mast cells, induces the rapid tyrosine phosphorylation of STAT6 and thereby controls mast cell survival and release of cytokines such as IL4. This Mus musculus (Mouse) protein is Interleukin-15 (Il15).